A 285-amino-acid polypeptide reads, in one-letter code: Putative pyruvate, phosphate dikinase regulatory protein (285 aa).

Residue Gly-165–Thr-172 coordinates ADP.

It belongs to the pyruvate, phosphate/water dikinase regulatory protein family. PDRP subfamily.

The enzyme catalyses N(tele)-phospho-L-histidyl/L-threonyl-[pyruvate, phosphate dikinase] + ADP = N(tele)-phospho-L-histidyl/O-phospho-L-threonyl-[pyruvate, phosphate dikinase] + AMP + H(+). It catalyses the reaction N(tele)-phospho-L-histidyl/O-phospho-L-threonyl-[pyruvate, phosphate dikinase] + phosphate + H(+) = N(tele)-phospho-L-histidyl/L-threonyl-[pyruvate, phosphate dikinase] + diphosphate. Its function is as follows. Bifunctional serine/threonine kinase and phosphorylase involved in the regulation of the pyruvate, phosphate dikinase (PPDK) by catalyzing its phosphorylation/dephosphorylation. The polypeptide is Putative pyruvate, phosphate dikinase regulatory protein (Lactobacillus delbrueckii subsp. bulgaricus (strain ATCC BAA-365 / Lb-18)).